A 412-amino-acid polypeptide reads, in one-letter code: MQVYLVGGAVRDYLLGHPYQEKDYVVVGATPEHMLAQGFQPVGKDFPVFLHPETKEEYALARTERKSGQGYHGFQFFTDTTVSLEDDLIRRDLTINAIAMDQDGKIYDPYGGQNDLENKILRHVSEAFAEDPLRVLRVARFAARYFPYGFQIAPETLQLMQTMADSGELDALTPERVWKETSRALMENHADIYFQTLRDCGALKHLFPEIDALFGVPQRPEYHPEVDCGIHTLMSLQQACKSNYSLDVRFAVLVHDLGKALTPAEELPRHIMHEERGIKPVTQLCERLRVPTQTKQLALSVCKEHLKCHQIMSLKPGTLWRLLQRLDVLRRPERVEAFVQACECDAKGRLGLEDRPYPQAQYMREAMQIVRSIKVQDLPENIKGAEIGEMLIQYRIEALAEFKNQHQSLSHS.

Residues Gly-8 and Arg-11 each coordinate ATP. CTP is bound by residues Gly-8 and Arg-11. Mg(2+) is bound by residues Glu-21 and Asp-23. Residues Arg-91, Arg-137, and Arg-140 each coordinate ATP. 3 residues coordinate CTP: Arg-91, Arg-137, and Arg-140. The HD domain occupies 228 to 329; the sequence is CGIHTLMSLQ…WRLLQRLDVL (102 aa).

The protein belongs to the tRNA nucleotidyltransferase/poly(A) polymerase family. Bacterial CCA-adding enzyme type 1 subfamily. In terms of assembly, monomer. Can also form homodimers and oligomers. Mg(2+) serves as cofactor. Ni(2+) is required as a cofactor.

It catalyses the reaction a tRNA precursor + 2 CTP + ATP = a tRNA with a 3' CCA end + 3 diphosphate. It carries out the reaction a tRNA with a 3' CCA end + 2 CTP + ATP = a tRNA with a 3' CCACCA end + 3 diphosphate. Functionally, catalyzes the addition and repair of the essential 3'-terminal CCA sequence in tRNAs without using a nucleic acid template. Adds these three nucleotides in the order of C, C, and A to the tRNA nucleotide-73, using CTP and ATP as substrates and producing inorganic pyrophosphate. tRNA 3'-terminal CCA addition is required both for tRNA processing and repair. Also involved in tRNA surveillance by mediating tandem CCA addition to generate a CCACCA at the 3' terminus of unstable tRNAs. While stable tRNAs receive only 3'-terminal CCA, unstable tRNAs are marked with CCACCA and rapidly degraded. The sequence is that of Multifunctional CCA protein from Acinetobacter baumannii (strain AB307-0294).